The sequence spans 366 residues: Erythronate-4-phosphate dehydrogenase (366 aa).

2 residues coordinate substrate: S46 and T67. Residues D147 and T175 each contribute to the NAD(+) site. The active site involves R208. D228 is an NAD(+) binding site. E233 is an active-site residue. Catalysis depends on H250, which acts as the Proton donor. G253 serves as a coordination point for NAD(+). Substrate is bound at residue Y254.

Belongs to the D-isomer specific 2-hydroxyacid dehydrogenase family. PdxB subfamily. In terms of assembly, homodimer.

The protein localises to the cytoplasm. It catalyses the reaction 4-phospho-D-erythronate + NAD(+) = (R)-3-hydroxy-2-oxo-4-phosphooxybutanoate + NADH + H(+). Its pathway is cofactor biosynthesis; pyridoxine 5'-phosphate biosynthesis; pyridoxine 5'-phosphate from D-erythrose 4-phosphate: step 2/5. Catalyzes the oxidation of erythronate-4-phosphate to 3-hydroxy-2-oxo-4-phosphonooxybutanoate. In Coxiella burnetii (strain RSA 331 / Henzerling II), this protein is Erythronate-4-phosphate dehydrogenase.